Reading from the N-terminus, the 80-residue chain is uncharacterized protein (80 aa).

This is an uncharacterized protein from Acidianus sp. F28 (AFV-2).